Reading from the N-terminus, the 112-residue chain is Large ribosomal subunit protein uL22 (112 aa).

The protein belongs to the universal ribosomal protein uL22 family. As to quaternary structure, part of the 50S ribosomal subunit.

In terms of biological role, this protein binds specifically to 23S rRNA; its binding is stimulated by other ribosomal proteins, e.g. L4, L17, and L20. It is important during the early stages of 50S assembly. It makes multiple contacts with different domains of the 23S rRNA in the assembled 50S subunit and ribosome. Functionally, the globular domain of the protein is located near the polypeptide exit tunnel on the outside of the subunit, while an extended beta-hairpin is found that lines the wall of the exit tunnel in the center of the 70S ribosome. This is Large ribosomal subunit protein uL22 from Lawsonia intracellularis (strain PHE/MN1-00).